The following is a 564-amino-acid chain: Beta-hexosaminidase subunit B2 (564 aa).

The signal sequence occupies residues 1-19; it reads MKLKFIFLILFFIIGNSIG. N-linked (GlcNAc...) asparagine glycosylation is found at Asn-43, Asn-84, Asn-303, and Asn-347. Glu-357 (proton donor) is an active-site residue. Residues Asn-364, Asn-377, Asn-439, Asn-524, and Asn-551 are each glycosylated (N-linked (GlcNAc...) asparagine).

This sequence belongs to the glycosyl hydrolase 20 family.

It localises to the lysosome. The enzyme catalyses Hydrolysis of terminal non-reducing N-acetyl-D-hexosamine residues in N-acetyl-beta-D-hexosaminides.. In terms of biological role, responsible for the degradation of GM2 gangliosides, and a variety of other molecules containing terminal N-acetyl hexosamines. The polypeptide is Beta-hexosaminidase subunit B2 (hexb2) (Dictyostelium discoideum (Social amoeba)).